The primary structure comprises 337 residues: Ketol-acid reductoisomerase (NADP(+)) (337 aa).

The region spanning 1 to 181 (MKIYYEHDAD…GAARAGVIAT (181 aa)) is the KARI N-terminal Rossmann domain. NADP(+)-binding positions include 24–27 (FGSQ), arginine 47, serine 50, serine 52, and 82–85 (DEKQ). Residue histidine 107 is part of the active site. Glycine 133 is a binding site for NADP(+). The 147-residue stretch at 182 to 328 (TFKDETETDL…SRLRAMMPFL (147 aa)) folds into the KARI C-terminal knotted domain. 4 residues coordinate Mg(2+): aspartate 190, glutamate 194, glutamate 226, and glutamate 230. Position 251 (serine 251) interacts with substrate.

Belongs to the ketol-acid reductoisomerase family. It depends on Mg(2+) as a cofactor.

The catalysed reaction is (2R)-2,3-dihydroxy-3-methylbutanoate + NADP(+) = (2S)-2-acetolactate + NADPH + H(+). It catalyses the reaction (2R,3R)-2,3-dihydroxy-3-methylpentanoate + NADP(+) = (S)-2-ethyl-2-hydroxy-3-oxobutanoate + NADPH + H(+). It participates in amino-acid biosynthesis; L-isoleucine biosynthesis; L-isoleucine from 2-oxobutanoate: step 2/4. Its pathway is amino-acid biosynthesis; L-valine biosynthesis; L-valine from pyruvate: step 2/4. Its function is as follows. Involved in the biosynthesis of branched-chain amino acids (BCAA). Catalyzes an alkyl-migration followed by a ketol-acid reduction of (S)-2-acetolactate (S2AL) to yield (R)-2,3-dihydroxy-isovalerate. In the isomerase reaction, S2AL is rearranged via a Mg-dependent methyl migration to produce 3-hydroxy-3-methyl-2-ketobutyrate (HMKB). In the reductase reaction, this 2-ketoacid undergoes a metal-dependent reduction by NADPH to yield (R)-2,3-dihydroxy-isovalerate. This chain is Ketol-acid reductoisomerase (NADP(+)), found in Thermus thermophilus (strain ATCC BAA-163 / DSM 7039 / HB27).